Reading from the N-terminus, the 548-residue chain is (2S)-methylsuccinyl-CoA dehydrogenase (548 aa).

Residues A282 to S291 and W315 to T317 each bind FAD. A substrate-binding site is contributed by S291. Position 409–412 (E409–R412) interacts with substrate. Residues R437 and Q505 to G509 contribute to the FAD site. E532 functions as the Proton acceptor in the catalytic mechanism. A534 to E536 is a binding site for FAD.

This sequence belongs to the acyl-CoA dehydrogenase family. In terms of assembly, homodimer. It depends on FAD as a cofactor.

It catalyses the reaction (2S)-methylsuccinyl-CoA + oxidized [electron-transfer flavoprotein] + H(+) = 2-methylfumaryl-CoA + reduced [electron-transfer flavoprotein]. Its function is as follows. Involved in the ethylmalonyl-CoA pathway, a new acetyl-CoA assimilation strategy that operates in a number of bacteria and replaces the glyoxylate cycle. Catalyzes the oxidation of (2S)-methylsuccinyl-CoA to yield mesaconyl-(C1)-CoA. Highly specific for (S)-methylsuccinyl-CoA. This Cereibacter sphaeroides (Rhodobacter sphaeroides) protein is (2S)-methylsuccinyl-CoA dehydrogenase.